The sequence spans 69 residues: ATP synthase F(0) complex subunit 8 (69 aa).

Residues 8 to 24 (TWLLTITLMILALFCIY) form a helical membrane-spanning segment. N6-acetyllysine; alternate is present on K55. Residue K55 is modified to N6-succinyllysine; alternate. At K58 the chain carries N6-acetyllysine.

It belongs to the ATPase protein 8 family. As to quaternary structure, component of the ATP synthase complex composed at least of ATP5F1A/subunit alpha, ATP5F1B/subunit beta, ATP5MC1/subunit c (homooctomer), MT-ATP6/subunit a, MT-ATP8/subunit 8, ATP5ME/subunit e, ATP5MF/subunit f, ATP5MG/subunit g, ATP5MK/subunit k, ATP5MJ/subunit j, ATP5F1C/subunit gamma, ATP5F1D/subunit delta, ATP5F1E/subunit epsilon, ATP5PF/subunit F6, ATP5PB/subunit b, ATP5PD/subunit d, ATP5PO/subunit OSCP. ATP synthase complex consists of a soluble F(1) head domain (subunits alpha(3) and beta(3)) - the catalytic core - and a membrane F(0) domain - the membrane proton channel (subunits c, a, 8, e, f, g, k and j). These two domains are linked by a central stalk (subunits gamma, delta, and epsilon) rotating inside the F1 region and a stationary peripheral stalk (subunits F6, b, d, and OSCP). Interacts with PRICKLE3.

The protein resides in the mitochondrion membrane. Its function is as follows. Subunit 8, of the mitochondrial membrane ATP synthase complex (F(1)F(0) ATP synthase or Complex V) that produces ATP from ADP in the presence of a proton gradient across the membrane which is generated by electron transport complexes of the respiratory chain. ATP synthase complex consist of a soluble F(1) head domain - the catalytic core - and a membrane F(1) domain - the membrane proton channel. These two domains are linked by a central stalk rotating inside the F(1) region and a stationary peripheral stalk. During catalysis, ATP synthesis in the catalytic domain of F(1) is coupled via a rotary mechanism of the central stalk subunits to proton translocation. In vivo, can only synthesize ATP although its ATP hydrolase activity can be activated artificially in vitro. Part of the complex F(0) domain. The polypeptide is ATP synthase F(0) complex subunit 8 (Osphranter robustus (Wallaroo)).